We begin with the raw amino-acid sequence, 184 residues long: Probable type 3 secretion system regulator AscH (184 aa).

Positions 1-25 (MKIEGSDQLGGEQPQRQPLPPESMA) are disordered.

The protein belongs to the YopR family.

The protein resides in the secreted. Its function is as follows. May be involved in the regulation of the assembly of the type III secretion system (T3SS), also called injectisome, which is used to inject bacterial effector proteins into eukaryotic host cells. May control the polymerization of the needle. The chain is Probable type 3 secretion system regulator AscH from Aeromonas salmonicida subsp. salmonicida.